The primary structure comprises 447 residues: Tubulin beta chain (447 aa).

GTP contacts are provided by Gln11, Glu69, Ser138, Gly142, Thr143, Gly144, Asn204, and Asn226. Glu69 provides a ligand contact to Mg(2+). Positions 424–447 (QYQEASVSEGEEEYDEEAPLEGEE) are disordered. The span at 432–447 (EGEEEYDEEAPLEGEE) shows a compositional bias: acidic residues.

Belongs to the tubulin family. Dimer of alpha and beta chains. A typical microtubule is a hollow water-filled tube with an outer diameter of 25 nm and an inner diameter of 15 nM. Alpha-beta heterodimers associate head-to-tail to form protofilaments running lengthwise along the microtubule wall with the beta-tubulin subunit facing the microtubule plus end conferring a structural polarity. Microtubules usually have 13 protofilaments but different protofilament numbers can be found in some organisms and specialized cells. The cofactor is Mg(2+).

Its subcellular location is the cytoplasm. It localises to the cytoskeleton. Functionally, tubulin is the major constituent of microtubules, a cylinder consisting of laterally associated linear protofilaments composed of alpha- and beta-tubulin heterodimers. Microtubules grow by the addition of GTP-tubulin dimers to the microtubule end, where a stabilizing cap forms. Below the cap, tubulin dimers are in GDP-bound state, owing to GTPase activity of alpha-tubulin. The chain is Tubulin beta chain (TUB1) from Dothistroma septosporum (Red band needle blight fungus).